The following is a 164-amino-acid chain: FMN reductase (NADH) RutF (164 aa).

Belongs to the non-flavoprotein flavin reductase family. RutF subfamily.

The enzyme catalyses FMNH2 + NAD(+) = FMN + NADH + 2 H(+). Catalyzes the reduction of FMN to FMNH2 which is used to reduce pyrimidine by RutA via the Rut pathway. This chain is FMN reductase (NADH) RutF, found in Enterobacter sp. (strain 638).